The sequence spans 344 residues: MKRLIKDFTFDELKKWVEETGEKPFRANQIFEWLYKKNATDVNSFTNIPTQLRKRIEEEFILNSLRVVKYESDGESIKFLLELVDGNAIESVFLPYKYGNAICISTQVGCRMKCAFCASTIGGMIRNLSAGEMVDQIVNIENITKKKISNVVLMGSGEPFDNIENVFKFIDIINSKEGKNIGARHITISTVGIVDGIYKLSEYPKQVNLAISLHAPNNNLRNKLVPMNRKYSIEDILKAVDYYISKTNRRVTFEYALIDGVNDSIECANELAKILSGKLVHVNLIPVNPVNGRNFKKPPKERVKEFYNVLILSGIQVTIRRELGSSIAAACGQLRSRHYNISEK.

Glu90 functions as the Proton acceptor in the catalytic mechanism. The region spanning 96-326 is the Radical SAM core domain; sequence YKYGNAICIS…VTIRRELGSS (231 aa). Cys103 and Cys331 form a disulfide bridge. Cys110, Cys114, and Cys117 together coordinate [4Fe-4S] cluster. Residues 157 to 158, Ser189, 212 to 214, and Asn288 contribute to the S-adenosyl-L-methionine site; these read GE and SLH. Cys331 acts as the S-methylcysteine intermediate in catalysis.

Belongs to the radical SAM superfamily. RlmN family. Requires [4Fe-4S] cluster as cofactor.

Its subcellular location is the cytoplasm. The catalysed reaction is adenosine(2503) in 23S rRNA + 2 reduced [2Fe-2S]-[ferredoxin] + 2 S-adenosyl-L-methionine = 2-methyladenosine(2503) in 23S rRNA + 5'-deoxyadenosine + L-methionine + 2 oxidized [2Fe-2S]-[ferredoxin] + S-adenosyl-L-homocysteine. It catalyses the reaction adenosine(37) in tRNA + 2 reduced [2Fe-2S]-[ferredoxin] + 2 S-adenosyl-L-methionine = 2-methyladenosine(37) in tRNA + 5'-deoxyadenosine + L-methionine + 2 oxidized [2Fe-2S]-[ferredoxin] + S-adenosyl-L-homocysteine. In terms of biological role, specifically methylates position 2 of adenine 2503 in 23S rRNA and position 2 of adenine 37 in tRNAs. The protein is Probable dual-specificity RNA methyltransferase RlmN of Caldicellulosiruptor saccharolyticus (strain ATCC 43494 / DSM 8903 / Tp8T 6331).